Consider the following 217-residue polypeptide: Octanoyltransferase (217 aa).

The region spanning 32–207 (SESHDELWIV…TFSQLLGYQH (176 aa)) is the BPL/LPL catalytic domain. Substrate contacts are provided by residues 71–78 (RGGQVTYH), 138–140 (SLG), and 151–153 (GLA). Cys-169 functions as the Acyl-thioester intermediate in the catalytic mechanism.

This sequence belongs to the LipB family.

It localises to the cytoplasm. The catalysed reaction is octanoyl-[ACP] + L-lysyl-[protein] = N(6)-octanoyl-L-lysyl-[protein] + holo-[ACP] + H(+). The protein operates within protein modification; protein lipoylation via endogenous pathway; protein N(6)-(lipoyl)lysine from octanoyl-[acyl-carrier-protein]: step 1/2. Catalyzes the transfer of endogenously produced octanoic acid from octanoyl-acyl-carrier-protein onto the lipoyl domains of lipoate-dependent enzymes. Lipoyl-ACP can also act as a substrate although octanoyl-ACP is likely to be the physiological substrate. The protein is Octanoyltransferase of Shewanella baltica (strain OS155 / ATCC BAA-1091).